We begin with the raw amino-acid sequence, 230 residues long: Small ribosomal subunit protein uS3c (230 aa).

Positions 39–109 constitute a KH type-2 domain; that stretch reads IRSFIHGKLS…QIRVNVVEIS (71 aa).

Belongs to the universal ribosomal protein uS3 family. Part of the 30S ribosomal subunit.

Its subcellular location is the plastid. The protein localises to the chloroplast. The sequence is that of Small ribosomal subunit protein uS3c (rps3) from Porphyra purpurea (Red seaweed).